The sequence spans 463 residues: Quinolone resistance protein NorB (463 aa).

The next 14 helical transmembrane spans lie at Ile-17–Val-37, Ile-53–Ala-73, Ile-86–Ile-106, Ile-107–Ile-127, Tyr-142–Ala-162, Leu-165–Ile-185, Phe-201–Thr-221, Ser-230–Leu-250, Thr-273–Val-293, Tyr-299–Ile-319, Pro-334–Leu-354, Ile-357–Tyr-377, Met-403–Val-423, and Ile-435–Val-455.

Belongs to the major facilitator superfamily. TCR/Tet family.

It is found in the cell membrane. In terms of biological role, multidrug efflux pump that acts independently of NorA and is one of the factors that confers resistance against diverse quinolones and chemical compounds. This chain is Quinolone resistance protein NorB (norB), found in Staphylococcus aureus (strain Mu3 / ATCC 700698).